A 99-amino-acid polypeptide reads, in one-letter code: Aspartyl/glutamyl-tRNA(Asn/Gln) amidotransferase subunit C (99 aa).

This sequence belongs to the GatC family. Heterotrimer of A, B and C subunits.

It carries out the reaction L-glutamyl-tRNA(Gln) + L-glutamine + ATP + H2O = L-glutaminyl-tRNA(Gln) + L-glutamate + ADP + phosphate + H(+). The catalysed reaction is L-aspartyl-tRNA(Asn) + L-glutamine + ATP + H2O = L-asparaginyl-tRNA(Asn) + L-glutamate + ADP + phosphate + 2 H(+). Its function is as follows. Allows the formation of correctly charged Asn-tRNA(Asn) or Gln-tRNA(Gln) through the transamidation of misacylated Asp-tRNA(Asn) or Glu-tRNA(Gln) in organisms which lack either or both of asparaginyl-tRNA or glutaminyl-tRNA synthetases. The reaction takes place in the presence of glutamine and ATP through an activated phospho-Asp-tRNA(Asn) or phospho-Glu-tRNA(Gln). The protein is Aspartyl/glutamyl-tRNA(Asn/Gln) amidotransferase subunit C of Variovorax paradoxus (strain S110).